Reading from the N-terminus, the 584-residue chain is Putative adenine deaminase BA_3032/GBAA_3032/BAS2818 (584 aa).

The protein belongs to the metallo-dependent hydrolases superfamily. Adenine deaminase family.

It carries out the reaction adenine + H2O + H(+) = hypoxanthine + NH4(+). The chain is Putative adenine deaminase BA_3032/GBAA_3032/BAS2818 from Bacillus anthracis.